The sequence spans 526 residues: Arginine/ornithine antiporter ArcD1 (526 aa).

Transmembrane regions (helical) follow at residues 8-28, 41-61, 88-108, 128-148, 160-180, 220-240, 255-275, 297-317, 354-374, 378-398, 407-427, 428-448, 466-486, and 495-515; these read GIGLAALVAIIVSGAIGGGVF, GGVVISWIVIGFGILMLVLSL, FISGWGYWLSAWAGNIAFAVL, LTILSVIVVSIVSWGLTLLVM, IVLVAKLIPLFVFVIAGIVTF, VKGSLMVMIWVFVGIEGAAMM, IFGLIALLVIYILLSLLPFGF, VGGWGGSLMAIGLVISLLGAW, LLLTQLIVQIFLIVTYFVADA, FVYLCTAVIMICYALVGLYLF, TSNIIIGFIAAAFQILALYYS, GWQFVWLSLILYAVGFILYAL, FILTVLGILAVFGVYGNWLGL, and NTLLVAVVPLIVVTFIVYFVV.

It belongs to the amino acid-polyamine-organocation (APC) superfamily. Basic amino acid/polyamine antiporter (APA) (TC 2.A.3.2) family.

Its subcellular location is the cell membrane. It carries out the reaction L-ornithine(in) + L-arginine(out) = L-ornithine(out) + L-arginine(in). Catalyzes electroneutral exchange between L-arginine and L-ornithine. Can also efficiently translocate L-histidine and L-lysine. ArcD1 is the main L-arginine/L-ornithine exchanger in the arginine deiminase (ADI) pathway. The protein is Arginine/ornithine antiporter ArcD1 of Lactococcus lactis subsp. cremoris (strain MG1363).